Consider the following 233-residue polypeptide: Small ribosomal subunit protein uS5 (233 aa).

Composition is skewed to basic and acidic residues over residues 1–12 and 39–54; these read MANESEIQKTEN and RGRDGRGRRDDRRNEE. Residues 1 to 54 form a disordered region; the sequence is MANESEIQKTENAEVANAANGTNPNNERRGRGGRGRGGRGRDGRGRRDDRRNEE. One can recognise an S5 DRBM domain in the interval 59 to 122; that stretch reads LIEKLVHINR…AAAKKTMIRV (64 aa).

Belongs to the universal ribosomal protein uS5 family. In terms of assembly, part of the 30S ribosomal subunit. Contacts proteins S4 and S8.

In terms of biological role, with S4 and S12 plays an important role in translational accuracy. Located at the back of the 30S subunit body where it stabilizes the conformation of the head with respect to the body. This is Small ribosomal subunit protein uS5 from Zymomonas mobilis subsp. mobilis (strain ATCC 31821 / ZM4 / CP4).